The primary structure comprises 226 residues: Biosynthetic peptidoglycan transglycosylase (226 aa).

A helical transmembrane segment spans residues 5–25; it reads IGVTVLAVVGLLLLPYLLTPL.

The protein belongs to the glycosyltransferase 51 family.

It is found in the cell inner membrane. The catalysed reaction is [GlcNAc-(1-&gt;4)-Mur2Ac(oyl-L-Ala-gamma-D-Glu-L-Lys-D-Ala-D-Ala)](n)-di-trans,octa-cis-undecaprenyl diphosphate + beta-D-GlcNAc-(1-&gt;4)-Mur2Ac(oyl-L-Ala-gamma-D-Glu-L-Lys-D-Ala-D-Ala)-di-trans,octa-cis-undecaprenyl diphosphate = [GlcNAc-(1-&gt;4)-Mur2Ac(oyl-L-Ala-gamma-D-Glu-L-Lys-D-Ala-D-Ala)](n+1)-di-trans,octa-cis-undecaprenyl diphosphate + di-trans,octa-cis-undecaprenyl diphosphate + H(+). It functions in the pathway cell wall biogenesis; peptidoglycan biosynthesis. Its function is as follows. Peptidoglycan polymerase that catalyzes glycan chain elongation from lipid-linked precursors. The protein is Biosynthetic peptidoglycan transglycosylase of Nitrobacter hamburgensis (strain DSM 10229 / NCIMB 13809 / X14).